Consider the following 377-residue polypeptide: Chaperone protein DnaJ (377 aa).

The 65-residue stretch at 5–69 folds into the J domain; it reads DYYEVLGVSK…NKRANYDQFG (65 aa). A CR-type zinc finger spans residues 134 to 216; the sequence is GTEKEISIRK…CHGKGTETKN (83 aa). Cysteine 147, cysteine 150, cysteine 164, cysteine 167, cysteine 190, cysteine 193, cysteine 204, and cysteine 207 together coordinate Zn(2+). 4 CXXCXGXG motif repeats span residues 147–154, 164–171, 190–197, and 204–211; these read CETCDGSG, CHYCNGSG, CPVCNGTG, and CPTCHGKG.

The protein belongs to the DnaJ family. Homodimer. Zn(2+) serves as cofactor.

Its subcellular location is the cytoplasm. In terms of biological role, participates actively in the response to hyperosmotic and heat shock by preventing the aggregation of stress-denatured proteins and by disaggregating proteins, also in an autonomous, DnaK-independent fashion. Unfolded proteins bind initially to DnaJ; upon interaction with the DnaJ-bound protein, DnaK hydrolyzes its bound ATP, resulting in the formation of a stable complex. GrpE releases ADP from DnaK; ATP binding to DnaK triggers the release of the substrate protein, thus completing the reaction cycle. Several rounds of ATP-dependent interactions between DnaJ, DnaK and GrpE are required for fully efficient folding. Also involved, together with DnaK and GrpE, in the DNA replication of plasmids through activation of initiation proteins. The protein is Chaperone protein DnaJ of Staphylococcus carnosus (strain TM300).